The chain runs to 141 residues: Nucleoside diphosphate kinase (141 aa).

Positions 11, 59, 87, 93, 104, and 114 each coordinate ATP. The Pros-phosphohistidine intermediate role is filled by His-117.

The protein belongs to the NDK family. Homotetramer. Requires Mg(2+) as cofactor.

The protein resides in the cytoplasm. The enzyme catalyses a 2'-deoxyribonucleoside 5'-diphosphate + ATP = a 2'-deoxyribonucleoside 5'-triphosphate + ADP. It catalyses the reaction a ribonucleoside 5'-diphosphate + ATP = a ribonucleoside 5'-triphosphate + ADP. Major role in the synthesis of nucleoside triphosphates other than ATP. The ATP gamma phosphate is transferred to the NDP beta phosphate via a ping-pong mechanism, using a phosphorylated active-site intermediate. The sequence is that of Nucleoside diphosphate kinase from Photorhabdus laumondii subsp. laumondii (strain DSM 15139 / CIP 105565 / TT01) (Photorhabdus luminescens subsp. laumondii).